Reading from the N-terminus, the 305-residue chain is tRNA dimethylallyltransferase (305 aa).

9–16 provides a ligand contact to ATP; sequence GPTASGKS. 11 to 16 lines the substrate pocket; that stretch reads TASGKS. Residues 34–37 form an interaction with substrate tRNA region; sequence DSKQ.

It belongs to the IPP transferase family. As to quaternary structure, monomer. Requires Mg(2+) as cofactor.

It carries out the reaction adenosine(37) in tRNA + dimethylallyl diphosphate = N(6)-dimethylallyladenosine(37) in tRNA + diphosphate. In terms of biological role, catalyzes the transfer of a dimethylallyl group onto the adenine at position 37 in tRNAs that read codons beginning with uridine, leading to the formation of N6-(dimethylallyl)adenosine (i(6)A). The chain is tRNA dimethylallyltransferase from Anaplasma marginale (strain St. Maries).